The primary structure comprises 87 residues: Omega-lycotoxin-Am1b (87 aa).

Residues Met-1–Cys-17 form the signal peptide. The propeptide occupies Gln-18–Arg-40. Disulfide bonds link Cys-44–Cys-59, Cys-51–Cys-64, Cys-58–Cys-84, and Cys-66–Cys-82.

This sequence belongs to the neurotoxin omega-lctx family. In terms of tissue distribution, expressed by the venom gland.

The protein resides in the secreted. Modulates Cav2.1/CACNA1A voltage-gated calcium channels (P/Q-type currents) in rat cerebellar Purkinje cells and hippocampal CA1-CA3 neurons. At saturating concentrations (&gt;10 nM) decelerates activation kinetics and slightly increases peak amplitude without affecting deactivation kinetics. In vivo, does not cause death when intravenously injected into mice. In rat models, through its activity on Cav2.1/CACNA1A, has an ameliorative effect on memory defects provoked by hyperstimulation of N-methyl-D-aspartate receptors (NMDARs) in the hippocampus. The protein is Omega-lycotoxin-Am1b of Alopecosa marikovskyi (Wolf spider).